We begin with the raw amino-acid sequence, 256 residues long: Triosephosphate isomerase (256 aa).

Residue 12-14 coordinates substrate; the sequence is NWK. Catalysis depends on histidine 99, which acts as the Electrophile. Glutamate 169 serves as the catalytic Proton acceptor. Substrate-binding positions include glycine 175, serine 214, and 235–236; that span reads GG.

The protein belongs to the triosephosphate isomerase family. As to quaternary structure, homodimer.

It is found in the cytoplasm. It carries out the reaction D-glyceraldehyde 3-phosphate = dihydroxyacetone phosphate. It participates in carbohydrate biosynthesis; gluconeogenesis. The protein operates within carbohydrate degradation; glycolysis; D-glyceraldehyde 3-phosphate from glycerone phosphate: step 1/1. In terms of biological role, involved in the gluconeogenesis. Catalyzes stereospecifically the conversion of dihydroxyacetone phosphate (DHAP) to D-glyceraldehyde-3-phosphate (G3P). This Mesorhizobium japonicum (strain LMG 29417 / CECT 9101 / MAFF 303099) (Mesorhizobium loti (strain MAFF 303099)) protein is Triosephosphate isomerase.